The chain runs to 156 residues: Regulatory protein RecX (156 aa).

It belongs to the RecX family.

It localises to the cytoplasm. Functionally, modulates RecA activity. In Pseudomonas putida (strain GB-1), this protein is Regulatory protein RecX.